The primary structure comprises 413 residues: Ras association domain-containing protein 5 (413 aa).

The interval 1-105 (MASPAIGQRP…RDVRSIFEQP (105 aa)) is disordered. The segment covering 61 to 74 (ARGDPEPTPRDCRH) has biased composition (basic and acidic residues). Residues 117–165 (GHRFAELALRGGPGWCDLCGREVLRQALRCANCKFTCHPECRSLIQLDC) form a Phorbol-ester/DAG-type zinc finger. Residues Ser177 and Ser274 each carry the phosphoserine modification. The Ras-associating domain occupies 265 to 359 (PAATTDKRTS…LSFVLKENET (95 aa)). At Thr347 the chain carries Phosphothreonine. Residues 361-408 (DVEWDAFSIPELQNFLTILEKEEQDKIHQLQKKYNKFRQKLEEALRES) enclose the SARAH domain.

Interacts directly with activated HRAS; a RASSF5-STK4/MST1 complex probably associates with activated HRAS. Interacts with KRAS. Probably interacts with Ras-like GTPases RRAS, MRAS, RAP1B, RAP2A and RALA. Interacts with RRAS2. Can self-associate. Interacts with RSSF1 isoform A. The RSSF1 isoform A-RSSF5 heterodimer probably mediates the association of RSSF1 with HRAS. Isoform 2 interacts with activated RAP1A and ITGAL/LFA-1. Binds STK4/MST1, inhibiting STK4/MST1 autoactivation.

It localises to the cytoplasm. It is found in the cytoskeleton. Functionally, potential tumor suppressor. Seems to be involved in lymphocyte adhesion by linking RAP1A activation upon T-cell receptor or chemokine stimulation to integrin activation. Stimulates lymphocyte polarization and the patch-like distribution of ITGAL/LFA-1, resulting in an enhanced adhesion to ICAM1. Together with RAP1A may participate in regulation of microtubule growth. The association with activated RAP1A is required for directional movement of endothelial cells during wound healing. May be involved in regulation of Ras apoptotic function. The RASSF5-STK4/MST1 complex may mediate HRAS and KRAS induced apoptosis. This is Ras association domain-containing protein 5 (Rassf5) from Rattus norvegicus (Rat).